A 559-amino-acid chain; its full sequence is Potassium-transporting ATPase potassium-binding subunit (559 aa).

The next 13 membrane-spanning stretches (helical) occupy residues 5-25, 27-47, 63-83, 132-152, 170-190, 253-273, 283-303, 327-347, 356-376, 379-399, 416-436, 484-504, and 524-544; these read GFLLIASFLLILLVLAKPLGS, LARLIAAVPLPGVAGVERILW, LLALLTLNLLGLGILFCLLFW, GLTVQNFLSAATGIAVVFALI, LVRITLWILFPVALIIALFFI, LAQMLAIFLIPAALCFAFGEA, LLWAMSFIFVVCVAVVMWAEV, FGVLASSLFAVVTTAASCGAV, ALGGMVPMWLMQIGEVVFGGV, GLYGMLLFVLLAVFIAGLMIG, MTALAILVTPMLVLLGSALAM, LLAFCMFVGRFGVIIPVMAIA, and GALFIGLLIGTVLLVGALTFI.

It belongs to the KdpA family. As to quaternary structure, the system is composed of three essential subunits: KdpA, KdpB and KdpC.

It is found in the cell inner membrane. In terms of biological role, part of the high-affinity ATP-driven potassium transport (or Kdp) system, which catalyzes the hydrolysis of ATP coupled with the electrogenic transport of potassium into the cytoplasm. This subunit binds the periplasmic potassium ions and delivers the ions to the membrane domain of KdpB through an intramembrane tunnel. This is Potassium-transporting ATPase potassium-binding subunit from Salmonella typhi.